Consider the following 1533-residue polypeptide: Glycogen debranching enzyme (1533 aa).

Ser-64 carries the phosphoserine modification. Catalysis depends on residues Asp-527, His-530, and Asp-628.

It belongs to the glycogen debranching enzyme family. Monomer. Interacts with NHLRC1/malin. Post-translationally, ubiquitinated.

Its subcellular location is the cytoplasm. It catalyses the reaction Transfers a segment of a (1-&gt;4)-alpha-D-glucan to a new position in an acceptor, which may be glucose or a (1-&gt;4)-alpha-D-glucan.. The enzyme catalyses Hydrolysis of (1-&gt;6)-alpha-D-glucosidic branch linkages in glycogen phosphorylase limit dextrin.. Multifunctional enzyme acting as 1,4-alpha-D-glucan:1,4-alpha-D-glucan 4-alpha-D-glycosyltransferase and amylo-1,6-glucosidase in glycogen degradation. This Canis lupus familiaris (Dog) protein is Glycogen debranching enzyme (AGL).